Reading from the N-terminus, the 211-residue chain is MYQPDFPAVPFRLGLYPVVDSVQWIERLLEAGVRTLQLRIKDKRDEEVEDDVSAAIALGRRYNARLFINDYWRLAIKHNAYGVHLGQEDLETTDLKAIQAAGLRLGVSTHDDMEIDIALAARPSYIALGHVFPTQTKQMPSAPQGLEQLARHIERLGDYPTVAIGGISLERASPVLKTGVGSIAVVSAITRAEDWREATAQLLAIAGAGDE.

4-amino-2-methyl-5-(diphosphooxymethyl)pyrimidine is bound by residues 37–41 (QLRIK) and Asn-69. Residues Asp-70 and Asp-89 each coordinate Mg(2+). A 4-amino-2-methyl-5-(diphosphooxymethyl)pyrimidine-binding site is contributed by Ser-108. 134 to 136 (TQT) lines the 2-[(2R,5Z)-2-carboxy-4-methylthiazol-5(2H)-ylidene]ethyl phosphate pocket. Lys-137 contacts 4-amino-2-methyl-5-(diphosphooxymethyl)pyrimidine. 2-[(2R,5Z)-2-carboxy-4-methylthiazol-5(2H)-ylidene]ethyl phosphate-binding positions include Gly-166 and 186–187 (VS).

This sequence belongs to the thiamine-phosphate synthase family. Requires Mg(2+) as cofactor.

The enzyme catalyses 2-[(2R,5Z)-2-carboxy-4-methylthiazol-5(2H)-ylidene]ethyl phosphate + 4-amino-2-methyl-5-(diphosphooxymethyl)pyrimidine + 2 H(+) = thiamine phosphate + CO2 + diphosphate. It catalyses the reaction 2-(2-carboxy-4-methylthiazol-5-yl)ethyl phosphate + 4-amino-2-methyl-5-(diphosphooxymethyl)pyrimidine + 2 H(+) = thiamine phosphate + CO2 + diphosphate. It carries out the reaction 4-methyl-5-(2-phosphooxyethyl)-thiazole + 4-amino-2-methyl-5-(diphosphooxymethyl)pyrimidine + H(+) = thiamine phosphate + diphosphate. It functions in the pathway cofactor biosynthesis; thiamine diphosphate biosynthesis; thiamine phosphate from 4-amino-2-methyl-5-diphosphomethylpyrimidine and 4-methyl-5-(2-phosphoethyl)-thiazole: step 1/1. Condenses 4-methyl-5-(beta-hydroxyethyl)thiazole monophosphate (THZ-P) and 2-methyl-4-amino-5-hydroxymethyl pyrimidine pyrophosphate (HMP-PP) to form thiamine monophosphate (TMP). In Citrobacter koseri (strain ATCC BAA-895 / CDC 4225-83 / SGSC4696), this protein is Thiamine-phosphate synthase.